We begin with the raw amino-acid sequence, 142 residues long: Large ribosomal subunit protein uL11 (142 aa).

This sequence belongs to the universal ribosomal protein uL11 family. In terms of assembly, part of the ribosomal stalk of the 50S ribosomal subunit. Interacts with L10 and the large rRNA to form the base of the stalk. L10 forms an elongated spine to which L12 dimers bind in a sequential fashion forming a multimeric L10(L12)X complex. One or more lysine residues are methylated.

Forms part of the ribosomal stalk which helps the ribosome interact with GTP-bound translation factors. The sequence is that of Large ribosomal subunit protein uL11 from Proteus mirabilis (strain HI4320).